Consider the following 311-residue polypeptide: HTH-type transcriptional regulator DsdC (311 aa).

In terms of domain architecture, HTH lysR-type spans 15–72; it reads WQLSKMHTFEVAARHQSFALAAEELSLSPSAVSHRINQLEEELGIQLFVRSHRKVELT. Residues 32–51 constitute a DNA-binding region (H-T-H motif); sequence FALAAEELSLSPSAVSHRIN.

It belongs to the LysR transcriptional regulatory family.

Its function is as follows. Regulates the expression of the dsdX-dsdA operon. This is HTH-type transcriptional regulator DsdC from Escherichia coli (strain K12).